A 112-amino-acid polypeptide reads, in one-letter code: Integration host factor subunit alpha (112 aa).

The protein belongs to the bacterial histone-like protein family. In terms of assembly, heterodimer of an alpha and a beta chain.

In terms of biological role, this protein is one of the two subunits of integration host factor, a specific DNA-binding protein that functions in genetic recombination as well as in transcriptional and translational control. This chain is Integration host factor subunit alpha, found in Sinorhizobium medicae (strain WSM419) (Ensifer medicae).